The following is a 289-amino-acid chain: Urease accessory protein UreD (289 aa).

Belongs to the UreD family. In terms of assembly, ureD, UreF and UreG form a complex that acts as a GTP-hydrolysis-dependent molecular chaperone, activating the urease apoprotein by helping to assemble the nickel containing metallocenter of UreC. The UreE protein probably delivers the nickel.

The protein localises to the cytoplasm. Its function is as follows. Required for maturation of urease via the functional incorporation of the urease nickel metallocenter. This chain is Urease accessory protein UreD, found in Cupriavidus pinatubonensis (strain JMP 134 / LMG 1197) (Cupriavidus necator (strain JMP 134)).